A 506-amino-acid chain; its full sequence is D-alanine--D-alanyl carrier protein ligase (506 aa).

Position 152 to 153 (Thr152 to Ser153) interacts with ATP. Residue Asp197 participates in D-alanine binding. Asn292–Thr297 contributes to the ATP binding site. Val301 provides a ligand contact to D-alanine. ATP-binding positions include Asp383, Tyr395–Arg398, and Lys494. Lys494 contributes to the D-alanine binding site.

It belongs to the ATP-dependent AMP-binding enzyme family. DltA subfamily.

It localises to the cytoplasm. The enzyme catalyses holo-[D-alanyl-carrier protein] + D-alanine + ATP = D-alanyl-[D-alanyl-carrier protein] + AMP + diphosphate. It functions in the pathway cell wall biogenesis; lipoteichoic acid biosynthesis. In terms of biological role, catalyzes the first step in the D-alanylation of lipoteichoic acid (LTA), the activation of D-alanine and its transfer onto the D-alanyl carrier protein (Dcp) DltC. In an ATP-dependent two-step reaction, forms a high energy D-alanyl-AMP intermediate, followed by transfer of the D-alanyl residue as a thiol ester to the phosphopantheinyl prosthetic group of the Dcp. D-alanylation of LTA plays an important role in modulating the properties of the cell wall in Gram-positive bacteria, influencing the net charge of the cell wall. The protein is D-alanine--D-alanyl carrier protein ligase of Lacticaseibacillus rhamnosus (Lactobacillus rhamnosus).